The primary structure comprises 308 residues: tRNA pseudouridine synthase B (308 aa).

Asp33 functions as the Nucleophile in the catalytic mechanism.

The protein belongs to the pseudouridine synthase TruB family. Type 1 subfamily.

The catalysed reaction is uridine(55) in tRNA = pseudouridine(55) in tRNA. Responsible for synthesis of pseudouridine from uracil-55 in the psi GC loop of transfer RNAs. The sequence is that of tRNA pseudouridine synthase B from Nitrosomonas europaea (strain ATCC 19718 / CIP 103999 / KCTC 2705 / NBRC 14298).